The sequence spans 171 residues: Inosine/xanthosine triphosphatase (171 aa).

Substrate is bound at residue 8–13 (TTNPAK). 2 residues coordinate Mg(2+): Glu-38 and Glu-68. 68 to 69 (EA) lines the substrate pocket.

This sequence belongs to the YjjX NTPase family. Homodimer. The cofactor is Mg(2+). Mn(2+) serves as cofactor.

The catalysed reaction is XTP + H2O = XDP + phosphate + H(+). The enzyme catalyses ITP + H2O = IDP + phosphate + H(+). In terms of biological role, phosphatase that hydrolyzes non-canonical purine nucleotides such as XTP and ITP to their respective diphosphate derivatives. Probably excludes non-canonical purines from DNA/RNA precursor pool, thus preventing their incorporation into DNA/RNA and avoiding chromosomal lesions. This Salmonella arizonae (strain ATCC BAA-731 / CDC346-86 / RSK2980) protein is Inosine/xanthosine triphosphatase (yjjX).